The chain runs to 453 residues: Acid phosphatase (453 aa).

An N-terminal signal peptide occupies residues 1 to 18 (MFLQNLFLGFLAVVCANA). His69 functions as the Nucleophile in the catalytic mechanism. 6 N-linked (GlcNAc...) asparagine glycosylation sites follow: Asn95, Asn151, Asn183, Asn193, Asn243, and Asn319. The Proton donor role is filled by Asp331. Asn410, Asn429, and Asn443 each carry an N-linked (GlcNAc...) asparagine glycan.

The protein belongs to the histidine acid phosphatase family.

It localises to the secreted. Its subcellular location is the cell wall. It carries out the reaction a phosphate monoester + H2O = an alcohol + phosphate. This is Acid phosphatase (pho1) from Schizosaccharomyces pombe (strain 972 / ATCC 24843) (Fission yeast).